Reading from the N-terminus, the 155-residue chain is Cytochrome c-type biogenesis protein CcmE (155 aa).

The Cytoplasmic segment spans residues 1–8; sequence MNPIRKKR. A helical; Signal-anchor for type II membrane protein membrane pass occupies residues 9–29; sequence LYWILALLCGVSIAMALALSA. Residues 30–155 are Periplasmic-facing; the sequence is LQENINLFYT…PKRVKQESTR (126 aa). 2 residues coordinate heme: histidine 124 and tyrosine 128.

The protein belongs to the CcmE/CycJ family.

It localises to the cell inner membrane. In terms of biological role, heme chaperone required for the biogenesis of c-type cytochromes. Transiently binds heme delivered by CcmC and transfers the heme to apo-cytochromes in a process facilitated by CcmF and CcmH. The sequence is that of Cytochrome c-type biogenesis protein CcmE from Janthinobacterium sp. (strain Marseille) (Minibacterium massiliensis).